Here is a 97-residue protein sequence, read N- to C-terminus: Large ribosomal subunit protein uL23 (97 aa).

Belongs to the universal ribosomal protein uL23 family. As to quaternary structure, part of the 50S ribosomal subunit. Contacts protein L29, and trigger factor when it is bound to the ribosome.

In terms of biological role, one of the early assembly proteins it binds 23S rRNA. One of the proteins that surrounds the polypeptide exit tunnel on the outside of the ribosome. Forms the main docking site for trigger factor binding to the ribosome. The sequence is that of Large ribosomal subunit protein uL23 from Bartonella henselae (strain ATCC 49882 / DSM 28221 / CCUG 30454 / Houston 1) (Rochalimaea henselae).